The chain runs to 245 residues: MRVGVLGAKGKVGATMVQAVEAADDLTFTTGVDAGDPLSALVDTRTDVVIDFTHPSVVMDNLKFLIDNGIHAVVGTTGFTDERISQVQDWLADKPESAVLIAPNFAIGAVLSMHFAQQAARFFESVEVIELHHPHKADAPSGTAARTAKLIAAARKDMPPNPDATSTGLEGARGADVDGIPVHSIRLAGLVAHQEVLFGTQGETLTIRHDSLDRTSFVPGVLLAVRKVSERPGLSVGIEPLLDLT.

NAD(+) contacts are provided by residues 7–12 (GAKGKV), 75–77 (GTT), and 102–105 (APNF). The active-site Proton donor/acceptor is the His-132. His-133 contributes to the (S)-2,3,4,5-tetrahydrodipicolinate binding site. Catalysis depends on Lys-136, which acts as the Proton donor. (S)-2,3,4,5-tetrahydrodipicolinate is bound at residue 142-143 (GT).

This sequence belongs to the DapB family.

Its subcellular location is the cytoplasm. It carries out the reaction (S)-2,3,4,5-tetrahydrodipicolinate + NAD(+) + H2O = (2S,4S)-4-hydroxy-2,3,4,5-tetrahydrodipicolinate + NADH + H(+). The catalysed reaction is (S)-2,3,4,5-tetrahydrodipicolinate + NADP(+) + H2O = (2S,4S)-4-hydroxy-2,3,4,5-tetrahydrodipicolinate + NADPH + H(+). It functions in the pathway amino-acid biosynthesis; L-lysine biosynthesis via DAP pathway; (S)-tetrahydrodipicolinate from L-aspartate: step 4/4. Its function is as follows. Catalyzes the conversion of 4-hydroxy-tetrahydrodipicolinate (HTPA) to tetrahydrodipicolinate. The sequence is that of 4-hydroxy-tetrahydrodipicolinate reductase from Mycobacterium sp. (strain JLS).